We begin with the raw amino-acid sequence, 259 residues long: Protein FAM220A (259 aa).

A disordered region spans residues 29–66 (GLKRRSEKRNPSPSDVPSWTDQPVADTHGKSRAMAAAS). A compositionally biased stretch (polar residues) spans 39–49 (PSPSDVPSWTD).

As to quaternary structure, interacts with transcriptional activator STAT3; the interaction occurs in both the nucleus and the cytoplasm, is enhanced by IL6 and promotes STAT3 dephosphorylation, leading to negative regulation of STAT3 transcriptional activator activity. Can interact with both unphosphorylated and phosphorylated STAT3 but interacts preferentially with phosphorylated STAT3 in the nucleus. Interacts with protein phosphatase PTPN2/TC45; this promotes interaction of PTPN2 with STAT3, leading to dephosphorylation of STAT3 by PTPN2.

The protein resides in the nucleus. Its subcellular location is the cytoplasm. It is found in the cytoplasmic vesicle. The protein localises to the secretory vesicle. It localises to the acrosome. In terms of biological role, promotes dephosphorylation of transcriptional activator STAT3 by interacting with both STAT3 and protein phosphatase PTPN2. This promotes interaction of PTPN2 with STAT3 and mediates STAT3 dephosphorylation by PTPN2, leading to negative regulation of STAT3 transcriptional activator activity. May be required for spermiogenesis or sperm function. In Rattus norvegicus (Rat), this protein is Protein FAM220A (Fam220a).